A 281-amino-acid chain; its full sequence is N-acetylmuramic acid 6-phosphate etherase (281 aa).

Positions 63–226 (IVPRMKQGGR…TTSVMIQLGR (164 aa)) constitute an SIS domain. The Proton donor role is filled by Glu-91. The active site involves Glu-122.

It belongs to the GCKR-like family. MurNAc-6-P etherase subfamily. Homodimer.

The enzyme catalyses N-acetyl-D-muramate 6-phosphate + H2O = N-acetyl-D-glucosamine 6-phosphate + (R)-lactate. It functions in the pathway amino-sugar metabolism; N-acetylmuramate degradation. In terms of biological role, specifically catalyzes the cleavage of the D-lactyl ether substituent of MurNAc 6-phosphate, producing GlcNAc 6-phosphate and D-lactate. This Bacteroides fragilis (strain ATCC 25285 / DSM 2151 / CCUG 4856 / JCM 11019 / LMG 10263 / NCTC 9343 / Onslow / VPI 2553 / EN-2) protein is N-acetylmuramic acid 6-phosphate etherase.